The following is a 375-amino-acid chain: Succinyl-diaminopimelate desuccinylase (375 aa).

H66 serves as a coordination point for Zn(2+). D68 is an active-site residue. D99 serves as a coordination point for Zn(2+). The active-site Proton acceptor is E133. Positions 134, 162, and 348 each coordinate Zn(2+).

It belongs to the peptidase M20A family. DapE subfamily. Homodimer. Zn(2+) serves as cofactor. It depends on Co(2+) as a cofactor.

The enzyme catalyses N-succinyl-(2S,6S)-2,6-diaminopimelate + H2O = (2S,6S)-2,6-diaminopimelate + succinate. It functions in the pathway amino-acid biosynthesis; L-lysine biosynthesis via DAP pathway; LL-2,6-diaminopimelate from (S)-tetrahydrodipicolinate (succinylase route): step 3/3. Functionally, catalyzes the hydrolysis of N-succinyl-L,L-diaminopimelic acid (SDAP), forming succinate and LL-2,6-diaminopimelate (DAP), an intermediate involved in the bacterial biosynthesis of lysine and meso-diaminopimelic acid, an essential component of bacterial cell walls. The protein is Succinyl-diaminopimelate desuccinylase of Janthinobacterium sp. (strain Marseille) (Minibacterium massiliensis).